We begin with the raw amino-acid sequence, 207 residues long: GTP-binding protein Rheb homolog 1 (207 aa).

GTP is bound by residues glycine 25, lysine 26, serine 27, tyrosine 42, threonine 45, asparagine 126, aspartate 129, and alanine 157. A Mg(2+)-binding site is contributed by serine 27. Residues 42-50 (YESTIEDQH) carry the Effector region motif. A Mg(2+)-binding site is contributed by threonine 45. The segment covering 180 to 193 (NLSPTERPNGNSPK) has biased composition (polar residues). Residues 180–207 (NLSPTERPNGNSPKRNPFKDDGKPCSIS) form a disordered region. The span at 196–207 (PFKDDGKPCSIS) shows a compositional bias: basic and acidic residues. Cysteine 204 carries the cysteine methyl ester modification. A lipid anchor (S-farnesyl cysteine) is attached at cysteine 204. Residues 205 to 207 (SIS) constitute a propeptide, removed in mature form.

The protein belongs to the small GTPase superfamily. Rheb family.

It localises to the cell membrane. It catalyses the reaction GTP + H2O = GDP + phosphate + H(+). Its function is as follows. Binds GTP and exhibits intrinsic GTPase activity. In Caenorhabditis elegans, this protein is GTP-binding protein Rheb homolog 1 (rheb-1).